We begin with the raw amino-acid sequence, 535 residues long: MRIKYPPQTVDRVLIFDTTLRDGEQSPGASLNVDEKLTIARQLARLGVDIIEAGFPFASPGDFEAVQRIAETVGTETGPVICGLARATRQDIEAAAKALKPAYYPRIHTFIATSDIHLEYKLRKTRAEVLEIAQEMVAYAKSFVDDVEFSPEDAGRSDPEFLYEVLERVIDAGATTVNIPDTVGYTTPAEFGALIKGIKENVPNIDRAVISVHGHNDLGLAVANFLEAVKNGARQLECTINGIGERAGNAALEELVMALYVRRQYFNPFLGRPPESEAPLTNINTREIYKTSRLVSNLTGMLIQPNKAIVGANAFAHQSGIHQDGVLKHKQTYEIMDAQLIGLADNQIVLGKLSGRNAFATRLRELGFELSETELNKAFLRFKDLADKKKEITDWDLEAIAKDETQGIDLQGYQLEFVQVSCGDHARPTATVTVRTPSGEELTDAAIGTGPVDAVYRAINRVVQIPNRLIEYSVQSVTAGIDAIGEVTIRLQHQDRIYSGHAANTDIIVASAQAYMNALNRLYRGLEQRALHPQA.

The region spanning 13 to 274 is the Pyruvate carboxyltransferase domain; that stretch reads VLIFDTTLRD…YFNPFLGRPP (262 aa). Mn(2+) is bound by residues aspartate 22, histidine 213, histidine 215, and asparagine 249. The segment at 414 to 535 is regulatory domain; the sequence is QLEFVQVSCG…LEQRALHPQA (122 aa).

The protein belongs to the alpha-IPM synthase/homocitrate synthase family. LeuA type 1 subfamily. In terms of assembly, homodimer. The cofactor is Mn(2+).

The protein localises to the cytoplasm. It catalyses the reaction 3-methyl-2-oxobutanoate + acetyl-CoA + H2O = (2S)-2-isopropylmalate + CoA + H(+). The protein operates within amino-acid biosynthesis; L-leucine biosynthesis; L-leucine from 3-methyl-2-oxobutanoate: step 1/4. Catalyzes the condensation of the acetyl group of acetyl-CoA with 3-methyl-2-oxobutanoate (2-ketoisovalerate) to form 3-carboxy-3-hydroxy-4-methylpentanoate (2-isopropylmalate). The polypeptide is 2-isopropylmalate synthase (Thermosynechococcus vestitus (strain NIES-2133 / IAM M-273 / BP-1)).